We begin with the raw amino-acid sequence, 575 residues long: Sclareol synthase, chloroplastic (575 aa).

The N-terminal 51 residues, methionine 1–methionine 51, are a transit peptide targeting the chloroplast. 5 residues coordinate Mg(2+): aspartate 329, aspartate 333, asparagine 473, serine 477, and glutamate 481. Positions aspartate 329–aspartate 333 match the DDXXD motif motif.

Belongs to the terpene synthase family.

The protein localises to the plastid. The protein resides in the chloroplast. The catalysed reaction is 8-hydroxycopalyl diphosphate + H2O = sclareol + diphosphate. The protein operates within secondary metabolite biosynthesis; terpenoid biosynthesis. Its function is as follows. Involved in the biosynthesis of labdane-type diterpenoid including sclareol, a diterpene-diol that is used as fragrance and flavoring, and has anticancer effects (able to kill leukemic and colon cancer cells by apoptosis). Sclareol can also be used as synthesis precursor of ambergris substitution fragance products such as ambrox. Terpene synthase that catalyzes the conversion of 8-hydroxy-copalyl diphosphate to sclareol. In Salvia sclarea (Clary sage), this protein is Sclareol synthase, chloroplastic.